Here is a 73-residue protein sequence, read N- to C-terminus: Large ribosomal subunit protein bL31 (73 aa).

Belongs to the bacterial ribosomal protein bL31 family. Type A subfamily. Part of the 50S ribosomal subunit.

Its function is as follows. Binds the 23S rRNA. The protein is Large ribosomal subunit protein bL31 of Rhizobium etli (strain CIAT 652).